Consider the following 345-residue polypeptide: Anthranilate phosphoribosyltransferase (345 aa).

Residues Gly-80, 83-84 (GD), Thr-88, 90-93 (NIST), 108-116 (KHGNRSVTS), and Ser-120 contribute to the 5-phospho-alpha-D-ribose 1-diphosphate site. Anthranilate is bound at residue Gly-80. Position 92 (Ser-92) interacts with Mg(2+). Asn-111 contributes to the anthranilate binding site. Residue Arg-166 coordinates anthranilate. Mg(2+) contacts are provided by Asp-229 and Glu-230.

The protein belongs to the anthranilate phosphoribosyltransferase family. As to quaternary structure, homodimer. Mg(2+) is required as a cofactor.

The enzyme catalyses N-(5-phospho-beta-D-ribosyl)anthranilate + diphosphate = 5-phospho-alpha-D-ribose 1-diphosphate + anthranilate. The protein operates within amino-acid biosynthesis; L-tryptophan biosynthesis; L-tryptophan from chorismate: step 2/5. In terms of biological role, catalyzes the transfer of the phosphoribosyl group of 5-phosphorylribose-1-pyrophosphate (PRPP) to anthranilate to yield N-(5'-phosphoribosyl)-anthranilate (PRA). This chain is Anthranilate phosphoribosyltransferase, found in Chlorobium phaeobacteroides (strain BS1).